Here is a 616-residue protein sequence, read N- to C-terminus: UPF0329 protein ECU02_1540 (616 aa).

Composition is skewed to basic and acidic residues over residues 350 to 359 (EREKREESKG) and 369 to 381 (GAGEAKEESKEED). Positions 350–427 (EREKREESKG…RKGDGHHYKI (78 aa)) are disordered. Positions 382–396 (GKEEEGVEAEEEESA) are enriched in acidic residues. Basic residues predominate over residues 408–427 (ARRKKSLKGKRKGDGHHYKI).

It belongs to the UPF0329 family.

The sequence is that of UPF0329 protein ECU02_1540 from Encephalitozoon cuniculi (strain GB-M1) (Microsporidian parasite).